An 81-amino-acid chain; its full sequence is Conotoxin ArMKLT2-0311 (81 aa).

The first 22 residues, 1-22 (MKLTCVLIVALLFLTACQLTTA), serve as a signal peptide directing secretion. Residues 23–34 (DDSRDKQEDPLV) show a composition bias toward basic and acidic residues. Residues 23-45 (DDSRDKQEDPLVRSHRKMQKSED) form a disordered region. A propeptide spanning residues 23 to 51 (DDSRDKQEDPLVRSHRKMQKSEDPKMAER) is cleaved from the precursor. 3 cysteine pairs are disulfide-bonded: cysteine 52/cysteine 67, cysteine 59/cysteine 71, and cysteine 66/cysteine 80.

The protein belongs to the conotoxin O1 superfamily. As to expression, expressed by the venom duct.

It is found in the secreted. The protein is Conotoxin ArMKLT2-0311 of Conus arenatus (Sand-dusted cone).